Reading from the N-terminus, the 415-residue chain is Erythronolide mycarosyltransferase (415 aa).

It belongs to the glycosyltransferase 28 family.

It carries out the reaction dTDP-beta-L-mycarose + erythronolide B = 3-O-alpha-L-mycarosylerythronolide B + dTDP + H(+). Functionally, involved in the biosynthesis of the macrolide antibiotic erythromycin. Catalyzes the reversible transfer of mycarosyl from dTDP-beta-L-mycarose to erythronolide B to yield 3-alpha-L-mycarosylerythronolide B. It can also use TDP-beta-L-cladinose. The chain is Erythronolide mycarosyltransferase from Saccharopolyspora erythraea (Streptomyces erythraeus).